A 642-amino-acid polypeptide reads, in one-letter code: MAPKPPPGTSARAWDGVTPALSEWVLDAVASMGFTRMTPVQASAIPLFMAHKDVVVEAVTGSGKTLSFLIPVVEKLLRLEEPLKKHHVGAIIISPTRELASQIYNVLTSLLAFHPPSASTLKPSDDDDDAPRQKFPSSTLKVVPQLLLGGSTTPAEDLSTFLKRSPNLLVSTPGRLLELLSSPHVHCPQSSFEMLVMDEADRLLDLGFKDTLQNILRRLPKQRRTGLFSASVSEAVDQIVRVGLRNPVKVMVKVKGTSGVQDKRTPASLQMTYLTAPPTHKFPAIKHILYSLEPAPQKTIMFVSTCSGVDYLSAILPSIIGDDFQLIPLHGKHQANVREKNFNRFVNSHTPAILLTTDVASRGLDIPSVDVVIQIDPPSDPKTFIHRCGRAGRAGRKGLSVVLLHPGREEDYVSFLEVRKTPVAPYPHTLTITDADAAAATETARKAVLADRALHDRGQKAFVSWFRSYSKHQASSIFRVADLDWEGLGNAWGLLKLPKMPELRNFQGDRTLGVNLDWENYAYKDKQREKRRKEQVQENAENGVADDQAAGKKRSSESVAWSRNLDNRNKKLKRREAKQARQQKDKWEKMTEEERQKVLETEKMLEQIRVKNEEERLLRRAAKDKESKAAGGDDDDEFKGFD.

Positions 14–42 match the Q motif motif; the sequence is WDGVTPALSEWVLDAVASMGFTRMTPVQA. The Helicase ATP-binding domain occupies 45–250; that stretch reads IPLFMAHKDV…RVGLRNPVKV (206 aa). 58 to 65 is a binding site for ATP; it reads AVTGSGKT. Positions 198–201 match the DEAD box motif; it reads DEAD. Residues 284-438 form the Helicase C-terminal domain; the sequence is AIKHILYSLE…TLTITDADAA (155 aa). A coiled-coil region spans residues 522–625; sequence AYKDKQREKR…RLLRRAAKDK (104 aa). Basic and acidic residues-rich tracts occupy residues 527–536 and 577–628; these read QREKRRKEQV and AKQA…KESK. Residues 527–642 form a disordered region; that stretch reads QREKRRKEQV…DDDDEFKGFD (116 aa). Acidic residues predominate over residues 632–642; it reads GDDDDEFKGFD.

This sequence belongs to the DEAD box helicase family. DDX55/SPB4 subfamily. In terms of assembly, component of pre-60S ribosomal complexes.

The protein resides in the nucleus. The protein localises to the nucleolus. The enzyme catalyses ATP + H2O = ADP + phosphate + H(+). Functionally, ATP-binding RNA helicase involved in the biogenesis of 60S ribosomal subunits. Binds 90S pre-ribosomal particles and dissociates from pre-60S ribosomal particles after processing of 27SB pre-rRNA. Required for the normal formation of 18S rRNA through the processing of pre-rRNAs at sites A0, A1 and A2, and the normal formation of 25S and 5.8S rRNAs through the processing of pre-rRNAs at sites C1 and C2. The chain is ATP-dependent rRNA helicase spb4 from Aspergillus niger (strain ATCC MYA-4892 / CBS 513.88 / FGSC A1513).